The chain runs to 1036 residues: Isoleucine--tRNA ligase (1036 aa).

A 'HIGH' region motif is present at residues 46-56 (PFATGLPHYGH). The 'KMSKS' region signature appears at 589 to 593 (KMSKR). ATP is bound at residue K592.

It belongs to the class-I aminoacyl-tRNA synthetase family. IleS type 2 subfamily. As to quaternary structure, monomer. The cofactor is Zn(2+).

The protein localises to the cytoplasm. The catalysed reaction is tRNA(Ile) + L-isoleucine + ATP = L-isoleucyl-tRNA(Ile) + AMP + diphosphate. Catalyzes the attachment of isoleucine to tRNA(Ile). As IleRS can inadvertently accommodate and process structurally similar amino acids such as valine, to avoid such errors it has two additional distinct tRNA(Ile)-dependent editing activities. One activity is designated as 'pretransfer' editing and involves the hydrolysis of activated Val-AMP. The other activity is designated 'posttransfer' editing and involves deacylation of mischarged Val-tRNA(Ile). This is Isoleucine--tRNA ligase from Chlamydia trachomatis serovar A (strain ATCC VR-571B / DSM 19440 / HAR-13).